The sequence spans 285 residues: Phospholipid phosphatase 1 (285 aa).

Over 1–6 the chain is Cytoplasmic; sequence MFDKAR. A PDZ-binding; involved in localization to the apical cell membrane motif is present at residues 5–7; that stretch reads ARL. A helical transmembrane segment spans residues 7–27; it reads LPYVALDVLCVVLAGLPFAIL. At 28–53 the chain is on the extracellular side; that stretch reads TSRHTPFQRGIFCNDESIKYPYKEDT. The chain crosses the membrane as a helical span at residues 54-74; it reads IPYALLGGIMIPFSIVVMIIG. The Cytoplasmic segment spans residues 75–94; it reads ETLSVYCNLLHSNSFIRNNY. A helical transmembrane segment spans residues 95-115; sequence IATIYKSIGTFLFGAAASQSL. Residues 116–165 are Extracellular-facing; the sequence is TDIAKYSIGRLRPHFLSVCDPDWSKVNCSDGYIEYYVCRGNAEKVKEGRL. The phosphatase sequence motif I stretch occupies residues 120-128; that stretch reads KYSIGRLRP. The N-linked (GlcNAc...) asparagine glycan is linked to Asn142. The helical transmembrane segment at 166–186 threads the bilayer; it reads SFYSGHSSFSMYCMVFVALYL. A phosphatase sequence motif II region spans residues 168-171; sequence YSGH. The active-site Proton donors is the His171. The Cytoplasmic portion of the chain corresponds to 187 to 199; sequence QARMKGDWARLLR. A helical transmembrane segment spans residues 200-220; the sequence is PTLQFGLVAASIYVGLSRISD. A phosphatase sequence motif III region spans residues 216 to 227; it reads SRISDYKHHWSD. At 221–229 the chain is on the extracellular side; it reads YKHHWSDVL. Catalysis depends on His223, which acts as the Nucleophile. The helical transmembrane segment at 230 to 250 threads the bilayer; that stretch reads TGLIQGAIVAILVAVYVSDFF. Residues 251–285 lie on the Cytoplasmic side of the membrane; the sequence is KARNSPFQERKEEDSHTTLHETPTAGNHYRSNHQP. Residues 260–269 show a composition bias toward basic and acidic residues; the sequence is RKEEDSHTTL. The disordered stretch occupies residues 260 to 285; it reads RKEEDSHTTLHETPTAGNHYRSNHQP.

Belongs to the PA-phosphatase related phosphoesterase family. In terms of assembly, forms functional homodimers and homooligomers that are not required for substrate recognition and catalytic activity. Can also form heterooligomers with PLPP2 and PLPP3. In terms of processing, N-glycosylated. N-linked sugars are of the complex type. N-glycosylation is not required for the phosphatase activity.

Its subcellular location is the cell membrane. The protein localises to the apical cell membrane. It is found in the membrane raft. The protein resides in the membrane. It localises to the caveola. The catalysed reaction is a 1,2-diacyl-sn-glycero-3-phosphate + H2O = a 1,2-diacyl-sn-glycerol + phosphate. The enzyme catalyses 1,2-dihexadecanoyl-sn-glycero-3-phosphate + H2O = 1,2-dihexadecanoyl-sn-glycerol + phosphate. It carries out the reaction 1,2-di-(9Z-octadecenoyl)-sn-glycero-3-phosphate + H2O = 1,2-di-(9Z-octadecenoyl)-sn-glycerol + phosphate. It catalyses the reaction a monoacyl-sn-glycero-3-phosphate + H2O = a monoacylglycerol + phosphate. The catalysed reaction is (9Z)-octadecenoyl-sn-glycero-3-phosphate + H2O = (9Z-octadecenoyl)-glycerol + phosphate. The enzyme catalyses a 1-acyl-sn-glycero-3-phosphate + H2O = a 1-acyl-sn-glycerol + phosphate. It carries out the reaction 1-(9Z-octadecenoyl)-sn-glycero-3-phosphate + H2O = 1-(9Z-octadecenoyl)-sn-glycerol + phosphate. It catalyses the reaction a 1,2-diacyl-sn-glycerol 3-diphosphate + H2O = a 1,2-diacyl-sn-glycero-3-phosphate + phosphate + H(+). The catalysed reaction is sphing-4-enine 1-phosphate + H2O = sphing-4-enine + phosphate. The enzyme catalyses an N-acylsphing-4-enine 1-phosphate + H2O = an N-acylsphing-4-enine + phosphate. It carries out the reaction N-(octanoyl)-sphing-4-enine-1-phosphate + H2O = N-octanoylsphing-4-enine + phosphate. It catalyses the reaction N-(9Z-octadecenoyl)-ethanolamine phosphate + H2O = N-(9Z-octadecenoyl) ethanolamine + phosphate. The catalysed reaction is 1-hexadecanoyl-2-(9Z-octadecenoyl)-sn-glycero-3-phosphate + H2O = 1-hexadecanoyl-2-(9Z-octadecenoyl)-sn-glycerol + phosphate. The protein operates within lipid metabolism; phospholipid metabolism. Its activity is regulated as follows. Magnesium-independent phospholipid phosphatase. Insensitive to N-ethylmaleimide. Magnesium-independent phospholipid phosphatase of the plasma membrane that catalyzes the dephosphorylation of a variety of glycerolipid and sphingolipid phosphate esters including phosphatidate/PA, lysophosphatidate/LPA, diacylglycerol pyrophosphate/DGPP, sphingosine 1-phosphate/S1P and ceramide 1-phosphate/C1P. Also acts on N-oleoyl ethanolamine phosphate/N-(9Z-octadecenoyl)-ethanolamine phosphate, a potential physiological compound. Through its extracellular phosphatase activity allows both the hydrolysis and the cellular uptake of these bioactive lipid mediators from the milieu, regulating signal transduction in different cellular processes. It is for instance essential for the extracellular hydrolysis of S1P and subsequent conversion into intracellular S1P. Involved in the regulation of inflammation, platelets activation, cell proliferation and migration among other processes. May also have an intracellular activity to regulate phospholipid-mediated signaling pathways. In Cavia porcellus (Guinea pig), this protein is Phospholipid phosphatase 1.